The following is a 103-amino-acid chain: Large ribosomal subunit protein bL21 (103 aa).

This sequence belongs to the bacterial ribosomal protein bL21 family. In terms of assembly, part of the 50S ribosomal subunit. Contacts protein L20.

Its function is as follows. This protein binds to 23S rRNA in the presence of protein L20. This chain is Large ribosomal subunit protein bL21, found in Albidiferax ferrireducens (strain ATCC BAA-621 / DSM 15236 / T118) (Rhodoferax ferrireducens).